The following is a 232-amino-acid chain: Probable caffeoyl-CoA O-methyltransferase At4g26220 (232 aa).

A substrate-binding site is contributed by lysine 7. S-adenosyl-L-methionine contacts are provided by residues threonine 49, glutamate 71, 73-74 (GV), serine 79, aspartate 97, and alanine 126. Aspartate 149 contacts substrate. Aspartate 149 serves as a coordination point for a divalent metal cation. Aspartate 151 lines the S-adenosyl-L-methionine pocket. 2 residues coordinate a divalent metal cation: aspartate 175 and asparagine 176.

It belongs to the class I-like SAM-binding methyltransferase superfamily. Cation-dependent O-methyltransferase family. CCoAMT subfamily. It depends on a divalent metal cation as a cofactor.

The catalysed reaction is (E)-caffeoyl-CoA + S-adenosyl-L-methionine = (E)-feruloyl-CoA + S-adenosyl-L-homocysteine + H(+). Its pathway is aromatic compound metabolism; phenylpropanoid biosynthesis. Its function is as follows. Methylates caffeoyl-CoA to feruloyl-CoA and 5-hydroxyferuloyl-CoA to sinapoyl-CoA. Plays a role in the synthesis of feruloylated polysaccharides. Involved in the reinforcement of the plant cell wall. Also involved in the responding to wounding or pathogen challenge by the increased formation of cell wall-bound ferulic acid polymers. This chain is Probable caffeoyl-CoA O-methyltransferase At4g26220, found in Arabidopsis thaliana (Mouse-ear cress).